The sequence spans 347 residues: GMP reductase (347 aa).

An NADP(+)-binding site is contributed by 108-131 (ADFQKTKDIMALTEDLIFICIDIA). Residues Gly181 and Gly183 each coordinate K(+). The Thioimidate intermediate role is filled by Cys186. Residue 216–239 (IIGDGGCSCAGDVSKAFGGGADFV) coordinates NADP(+).

It belongs to the IMPDH/GMPR family. GuaC type 1 subfamily. In terms of assembly, homotetramer.

It catalyses the reaction IMP + NH4(+) + NADP(+) = GMP + NADPH + 2 H(+). In terms of biological role, catalyzes the irreversible NADPH-dependent deamination of GMP to IMP. It functions in the conversion of nucleobase, nucleoside and nucleotide derivatives of G to A nucleotides, and in maintaining the intracellular balance of A and G nucleotides. The protein is GMP reductase of Photobacterium profundum (strain SS9).